Consider the following 527-residue polypeptide: Beta-glucosidase 19 (527 aa).

Positions 1 to 21 (MKIPLLGLLLLISLVGSPTRA) are cleaved as a signal peptide. Residues Q52 and H155 each contribute to the a beta-D-glucoside site. N183 is a glycosylation site (N-linked (GlcNAc...) asparagine). 200 to 201 (NE) contacts a beta-D-glucoside. Residue E201 is the Proton donor of the active site. A disulfide bridge links C220 with C231. The a beta-D-glucoside site is built by Y345 and E418. Residue E418 is the Nucleophile of the active site. A glycan (N-linked (GlcNAc...) asparagine) is linked at N462. Residues W469, 476–477 (EW), and F485 each bind a beta-D-glucoside. A glycan (N-linked (GlcNAc...) asparagine) is linked at N495. A Prevents secretion from ER motif is present at residues 524–527 (HEEL).

This sequence belongs to the glycosyl hydrolase 1 family.

It is found in the endoplasmic reticulum lumen. The enzyme catalyses Hydrolysis of terminal, non-reducing beta-D-glucosyl residues with release of beta-D-glucose.. This Arabidopsis thaliana (Mouse-ear cress) protein is Beta-glucosidase 19.